A 233-amino-acid polypeptide reads, in one-letter code: tRNA (guanine-N(7)-)-methyltransferase (233 aa).

Residues glutamate 64, glutamate 89, aspartate 116, and aspartate 138 each coordinate S-adenosyl-L-methionine. The active site involves aspartate 138. Substrate contacts are provided by residues lysine 142, aspartate 174, and 212 to 215 (TRYE).

This sequence belongs to the class I-like SAM-binding methyltransferase superfamily. TrmB family.

It carries out the reaction guanosine(46) in tRNA + S-adenosyl-L-methionine = N(7)-methylguanosine(46) in tRNA + S-adenosyl-L-homocysteine. It participates in tRNA modification; N(7)-methylguanine-tRNA biosynthesis. In terms of biological role, catalyzes the formation of N(7)-methylguanine at position 46 (m7G46) in tRNA. The protein is tRNA (guanine-N(7)-)-methyltransferase of Rhizobium johnstonii (strain DSM 114642 / LMG 32736 / 3841) (Rhizobium leguminosarum bv. viciae).